The primary structure comprises 870 residues: Leucine--tRNA ligase (870 aa).

A 'HIGH' region motif is present at residues 55–65 (PYPSGTLHMGH). The 'KMSKS' region motif lies at 626–630 (KMSKS). Lysine 629 contacts ATP.

Belongs to the class-I aminoacyl-tRNA synthetase family.

It is found in the cytoplasm. It carries out the reaction tRNA(Leu) + L-leucine + ATP = L-leucyl-tRNA(Leu) + AMP + diphosphate. This chain is Leucine--tRNA ligase, found in Prochlorococcus marinus (strain SARG / CCMP1375 / SS120).